The sequence spans 218 residues: uncharacterized protein (218 aa).

The 117-residue stretch at 7–123 (RVALADDQPL…ELIDAIRAAA (117 aa)) folds into the Response regulatory domain. At Asp-58 the chain carries 4-aspartylphosphate. Residues 150 to 215 (AEELAEPFTK…QAVVFAIRNG (66 aa)) form the HTH luxR-type domain. A DNA-binding region (H-T-H motif) is located at residues 174–193 (NEDIAEKLFVSESTVKTHVH).

Phosphorylated by YxjM.

The protein resides in the cytoplasm. Functionally, probable member of the two-component regulatory system YxjM/YxjL. This is an uncharacterized protein from Bacillus subtilis (strain 168).